We begin with the raw amino-acid sequence, 404 residues long: Exodeoxyribonuclease 7 large subunit (404 aa).

Belongs to the XseA family. As to quaternary structure, heterooligomer composed of large and small subunits.

The protein localises to the cytoplasm. The enzyme catalyses Exonucleolytic cleavage in either 5'- to 3'- or 3'- to 5'-direction to yield nucleoside 5'-phosphates.. Bidirectionally degrades single-stranded DNA into large acid-insoluble oligonucleotides, which are then degraded further into small acid-soluble oligonucleotides. This is Exodeoxyribonuclease 7 large subunit from Ruminiclostridium cellulolyticum (strain ATCC 35319 / DSM 5812 / JCM 6584 / H10) (Clostridium cellulolyticum).